Consider the following 293-residue polypeptide: MVEHYPVLHREVLSFFKNIKGRYIVDATVGGGGHSFLLLKNLPETFLIGIDKDDYALEKAEEKLSPFKGRFRLIKGSFKDIDTIVHSMDIKYVSGVLFDLGVSTFQLKTERGFSFQREEPLDMRMDRTQKKTAFDVVNRYTKIELEKIIKDYGEEKFARRIASAIVEARKKKRIETTKELAQIVYNVYPPPLRRGRIHPATKTFQAIRIEVNNELEEIKEGVNKGIDLLEKGGIIAVISFHSLEDRIVKNIYRERKRLKDIEILTKKPITPGTEEIRENPPSRSAKLRVAKRI.

Residues 32–34 (GGH), Asp-51, Phe-78, Asp-99, and Gln-106 contribute to the S-adenosyl-L-methionine site. The interval 271 to 293 (PGTEEIRENPPSRSAKLRVAKRI) is disordered.

The protein belongs to the methyltransferase superfamily. RsmH family.

The protein resides in the cytoplasm. The enzyme catalyses cytidine(1402) in 16S rRNA + S-adenosyl-L-methionine = N(4)-methylcytidine(1402) in 16S rRNA + S-adenosyl-L-homocysteine + H(+). Its function is as follows. Specifically methylates the N4 position of cytidine in position 1402 (C1402) of 16S rRNA. In Persephonella marina (strain DSM 14350 / EX-H1), this protein is Ribosomal RNA small subunit methyltransferase H.